Here is a 489-residue protein sequence, read N- to C-terminus: Occludin (489 aa).

Residues 1 to 51 (MMYEKRSYTGYGHPSSHYDYPPPSGPPGSFYLADVPPQHFYQWRSPPGIVR) lie on the Cytoplasmic side of the membrane. The MARVEL domain occupies 45–248 (SPPGIVRILQ…ICYFAQKTRH (204 aa)). A helical transmembrane segment spans residues 52–74 (ILQGSVVILCLVIFACVASTLAW). Topologically, residues 75 to 112 (EYYGSGGLLGYGGGLGSYYNGYYGGYNGYYYGGLTNPR) are extracellular. The chain crosses the membrane as a helical span at residues 113-137 (AANGFMIAMAVLCFLVTLGLVIAGL). The Cytoplasmic segment spans residues 138-147 (SKASGARSRR). A helical membrane pass occupies residues 148–172 (FYLLVAVLSGLLAFVMLIASIVYVV). The Extracellular portion of the chain corresponds to 173-222 (GVNPRAGLGASSGSLYYNQMLMLCNQMMSPVAGGIMNQYLYHYCMVDPQE). A disulfide bridge connects residues Cys-196 and Cys-216. A helical transmembrane segment spans residues 223–244 (AVAIVCGFLTVILLCVICYFAQ). The Cytoplasmic portion of the chain corresponds to 245–489 (KTRHKIWKYG…MVGGYDQSRS (245 aa)). Residue Ser-280 is modified to Phosphoserine. Thr-285 carries the phosphothreonine modification. Ser-300 is modified (phosphoserine). The segment at 308–382 (PAQENGYGHS…ESSGEQNRDD (75 aa)) is disordered. The segment covering 322 to 332 (PSVPPPEGPSP) has biased composition (pro residues). Residues 345 to 354 (PARRGHRQRP) are compositionally biased toward basic residues. Residues Tyr-364 and Tyr-368 each carry the phosphotyrosine modification. Residues 365-377 (ETDYTTAAESSGE) are compositionally biased toward polar residues. Phosphothreonine; by PKC/PRKCH occurs at positions 369 and 370. Ser-374 is modified (phosphoserine). Positions 381 to 489 (DDWASLYPPI…MVGGYDQSRS (109 aa)) constitute an OCEL domain. Residues 407–434 (LQRYKALCAEMDDIGTQLRQLSHELDCL) are a coiled coil. Ser-457 carries the phosphoserine modification.

This sequence belongs to the ELL/occludin family. As to quaternary structure, interacts with TJP1/ZO1. Interacts with VAPA. Interacts with CLDN1, CLDN6, CLDN9, CLDN11, CLDN12 and CLDN17. Interacts with PLSCR1. Interacts with LSR, ILDR1 and ILDR2. Interacts with TJP2/ZO2. Dephosphorylated by PTPRJ. As to expression, localized at tight junctions of both epithelial and endothelial cells.

The protein resides in the cell membrane. Its subcellular location is the cell junction. It localises to the tight junction. In terms of biological role, may play a role in the formation and regulation of the tight junction (TJ) paracellular permeability barrier. This chain is Occludin (OCLN), found in Potorous tridactylus (Potoroo).